The sequence spans 220 residues: Ribose-5-phosphate isomerase A (220 aa).

Substrate contacts are provided by residues 28 to 31 (TGST), 81 to 84 (DGAD), and 94 to 97 (KGGG). Glutamate 103 acts as the Proton acceptor in catalysis. Lysine 121 contributes to the substrate binding site.

This sequence belongs to the ribose 5-phosphate isomerase family. In terms of assembly, homodimer.

It carries out the reaction aldehydo-D-ribose 5-phosphate = D-ribulose 5-phosphate. It participates in carbohydrate degradation; pentose phosphate pathway; D-ribose 5-phosphate from D-ribulose 5-phosphate (non-oxidative stage): step 1/1. Catalyzes the reversible conversion of ribose-5-phosphate to ribulose 5-phosphate. The sequence is that of Ribose-5-phosphate isomerase A from Hydrogenovibrio crunogenus (strain DSM 25203 / XCL-2) (Thiomicrospira crunogena).